We begin with the raw amino-acid sequence, 247 residues long: PF03932 family protein CutC (247 aa).

Over residues 205–222 the composition is skewed to polar residues; sequence KSTRPSLMESNSSAQMGS. Residues 205–226 are disordered; the sequence is KSTRPSLMESNSSAQMGSNDVD.

This sequence belongs to the CutC family.

It localises to the cytoplasm. In Vibrio atlanticus (strain LGP32) (Vibrio splendidus (strain Mel32)), this protein is PF03932 family protein CutC.